The primary structure comprises 112 residues: Class I hydrophobin 7 (112 aa).

The first 23 residues, 1–23 (MFARQATSVSAFLVLTLSLFAAA), serve as a signal peptide directing secretion. 4 disulfide bridges follow: cysteine 36–cysteine 93, cysteine 43–cysteine 87, cysteine 44–cysteine 74, and cysteine 94–cysteine 107. An N-linked (GlcNAc...) asparagine glycan is attached at asparagine 96.

The protein belongs to the fungal hydrophobin family. As to quaternary structure, self-assembles to form functional amyloid fibrils called rodlets. Self-assembly into fibrillar rodlets occurs spontaneously at hydrophobic:hydrophilic interfaces and the rodlets further associate laterally to form amphipathic monolayers.

Its subcellular location is the secreted. It is found in the cell wall. In terms of biological role, aerial growth, conidiation, and dispersal of filamentous fungi in the environment rely upon a capability of their secreting small amphipathic proteins called hydrophobins (HPBs) with low sequence identity. Class I can self-assemble into an outermost layer of rodlet bundles on aerial cell surfaces, conferring cellular hydrophobicity that supports fungal growth, development and dispersal; whereas Class II form highly ordered films at water-air interfaces through intermolecular interactions but contribute nothing to the rodlet structure. This Flammulina velutipes (Agaricus velutipes) protein is Class I hydrophobin 7.